Reading from the N-terminus, the 467-residue chain is Na(+)/H(+) exchange regulatory cofactor-like protein nrfl-1 (467 aa).

PDZ domains lie at 12–94 (RLCV…ISEE) and 143–225 (LAEL…ASED). Residues 344–429 (MSSHTEVLPP…ASSTSGYDDD (86 aa)) are disordered. Polar residues predominate over residues 407-425 (PSPLSNGSSHGYAASSTSG).

As to quaternary structure, interacts (via PDZ 2 domain) with aat-6 (via PDZ-binding motif); the interaction sequesters aat-6 to the apical cell membrane of intestinal cells. Phosphorylated. Expressed in the excretory canal and intestine. Expressed on the apical cell membrane of intestinal cells (at protein level).

The protein resides in the cell projection. It is found in the microvillus membrane. It localises to the apical cell membrane. Scaffold protein that connects plasma membrane proteins with members of the ezrin/moesin/radixin family and thereby helps to link them to the actin cytoskeleton and to regulate their surface expression. Anchors the amino acid transporter protein aat-6 to the apical cell membrane of intestinal cells, particularly in older animals, in order to maintain amino acid homeostasis. May play a role in promoting fertility. The polypeptide is Na(+)/H(+) exchange regulatory cofactor-like protein nrfl-1 (Caenorhabditis elegans).